Consider the following 639-residue polypeptide: 1-deoxy-D-xylulose-5-phosphate synthase (639 aa).

Thiamine diphosphate is bound by residues His-76 and 117-119 (AHS). Asp-148 is a binding site for Mg(2+). Thiamine diphosphate contacts are provided by residues 149–150 (GS), Asn-181, Tyr-288, and Glu-370. Asn-181 lines the Mg(2+) pocket.

This sequence belongs to the transketolase family. DXPS subfamily. Homodimer. Mg(2+) is required as a cofactor. It depends on thiamine diphosphate as a cofactor.

The enzyme catalyses D-glyceraldehyde 3-phosphate + pyruvate + H(+) = 1-deoxy-D-xylulose 5-phosphate + CO2. The protein operates within metabolic intermediate biosynthesis; 1-deoxy-D-xylulose 5-phosphate biosynthesis; 1-deoxy-D-xylulose 5-phosphate from D-glyceraldehyde 3-phosphate and pyruvate: step 1/1. In terms of biological role, catalyzes the acyloin condensation reaction between C atoms 2 and 3 of pyruvate and glyceraldehyde 3-phosphate to yield 1-deoxy-D-xylulose-5-phosphate (DXP). The sequence is that of 1-deoxy-D-xylulose-5-phosphate synthase from Leptothrix cholodnii (strain ATCC 51168 / LMG 8142 / SP-6) (Leptothrix discophora (strain SP-6)).